The following is a 197-amino-acid chain: GTP cyclohydrolase 1 (197 aa).

Zn(2+) contacts are provided by C88, H91, and C160.

The protein belongs to the GTP cyclohydrolase I family. Homomer.

The enzyme catalyses GTP + H2O = 7,8-dihydroneopterin 3'-triphosphate + formate + H(+). It participates in cofactor biosynthesis; 7,8-dihydroneopterin triphosphate biosynthesis; 7,8-dihydroneopterin triphosphate from GTP: step 1/1. The polypeptide is GTP cyclohydrolase 1 (Clostridium beijerinckii (strain ATCC 51743 / NCIMB 8052) (Clostridium acetobutylicum)).